The following is a 204-amino-acid chain: Proteasome subunit beta 2 (204 aa).

The propeptide at 1-6 is removed in mature form; by autocatalysis; the sequence is MEVLPG. Catalysis depends on Thr-7, which acts as the Nucleophile.

It belongs to the peptidase T1B family. In terms of assembly, the 20S proteasome core is composed of 14 alpha and 14 beta subunits that assemble into four stacked heptameric rings, resulting in a barrel-shaped structure. The two inner rings, each composed of seven catalytic beta subunits, are sandwiched by two outer rings, each composed of seven alpha subunits. The catalytic chamber with the active sites is on the inside of the barrel. Has a gated structure, the ends of the cylinder being occluded by the N-termini of the alpha-subunits. Is capped at one or both ends by the proteasome regulatory ATPase, PAN.

It localises to the cytoplasm. It catalyses the reaction Cleavage of peptide bonds with very broad specificity.. Its activity is regulated as follows. The formation of the proteasomal ATPase PAN-20S proteasome complex, via the docking of the C-termini of PAN into the intersubunit pockets in the alpha-rings, triggers opening of the gate for substrate entry. Interconversion between the open-gate and close-gate conformations leads to a dynamic regulation of the 20S proteasome proteolysis activity. Functionally, component of the proteasome core, a large protease complex with broad specificity involved in protein degradation. The protein is Proteasome subunit beta 2 of Thermofilum pendens (strain DSM 2475 / Hrk 5).